The primary structure comprises 172 residues: Probable calcium-binding protein CML28 (172 aa).

4 EF-hand domains span residues 1 to 36 (MDST…FGIF), 37 to 72 (IPDD…ILGD), 95 to 130 (DEDE…LGLK), and 133 to 168 (RTAD…GGFA). Ca(2+) contacts are provided by Asp14, Asn16, Asp18, Arg20, Glu25, Asp50, Asn52, Asp54, Cys56, Glu61, Asp108, Asn110, Asp112, Glu119, Asp146, Asp148, Asp150, Arg152, and Glu157.

Its function is as follows. Potential calcium sensor. The chain is Probable calcium-binding protein CML28 (CML28) from Oryza sativa subsp. japonica (Rice).